A 653-amino-acid polypeptide reads, in one-letter code: Large subunit GTPase 1 homolog (653 aa).

The segment at 1–47 is disordered; sequence MGKKRGTGLGRSLQRQRGSERRGASSWLHASEVVGESGPERRSAVEQ. The 285-residue stretch at 155–439 folds into the CP-type G domain; the sequence is WRQLWRVIER…LCDCPGLVMP (285 aa). 203–206 contacts GTP; it reads NKAD. Residues 248 to 275 are compositionally biased toward acidic residues; that stretch reads ADSVADDLSDSEEESSSQEEDVTAEDSA. The disordered stretch occupies residues 248–323; it reads ADSVADDLSD…TCSEDEGGDK (76 aa). Residues 276 to 291 are compositionally biased toward polar residues; the sequence is ESTSTGSALQTENQCL. Over residues 293–320 the composition is skewed to acidic residues; it reads SDDDSSDEYEDCEDEEEDDWQTCSEDEG. GTP contacts are provided by residues 388–395 and 432–435; these read GYPNVGKS and DCPG. A disordered region spans residues 621-653; it reads APSAGSVVGKPWKKHGNRNKKEKVRRITKHLEN. A compositionally biased stretch (basic residues) spans 631 to 653; that stretch reads PWKKHGNRNKKEKVRRITKHLEN.

Belongs to the TRAFAC class YlqF/YawG GTPase family. LSG1 subfamily.

Its subcellular location is the cytoplasm. It localises to the endoplasmic reticulum. It is found in the nucleus. The protein resides in the cajal body. The enzyme catalyses GTP + H2O = GDP + phosphate + H(+). GTPase required for the XPO1/CRM1-mediated nuclear export of the 60S ribosomal subunit. Probably acts by mediating the release of NMD3 from the 60S ribosomal subunit after export into the cytoplasm. In terms of biological role, functions as a GTPase. May act by mediating the release of NMD3 from the 60S ribosomal subunit after export into the cytoplasm during the 60S ribosomal subunit maturation. The protein is Large subunit GTPase 1 homolog of Gallus gallus (Chicken).